The following is a 134-amino-acid chain: Retinoid-binding protein 7 (134 aa).

It belongs to the calycin superfamily. Fatty-acid binding protein (FABP) family. In terms of tissue distribution, highly expressed in white adipose tissue and mammary gland.

The protein localises to the cytoplasm. Its function is as follows. Intracellular transport of retinol. The polypeptide is Retinoid-binding protein 7 (Rbp7) (Mus musculus (Mouse)).